The chain runs to 510 residues: Histidine ammonia-lyase (510 aa).

Residues 143–145 (ASG) constitute a cross-link (5-imidazolinone (Ala-Gly)). A 2,3-didehydroalanine (Ser) modification is found at serine 144.

Belongs to the PAL/histidase family. Post-translationally, contains an active site 4-methylidene-imidazol-5-one (MIO), which is formed autocatalytically by cyclization and dehydration of residues Ala-Ser-Gly.

The protein localises to the cytoplasm. The catalysed reaction is L-histidine = trans-urocanate + NH4(+). It functions in the pathway amino-acid degradation; L-histidine degradation into L-glutamate; N-formimidoyl-L-glutamate from L-histidine: step 1/3. The polypeptide is Histidine ammonia-lyase (Shewanella pealeana (strain ATCC 700345 / ANG-SQ1)).